A 506-amino-acid polypeptide reads, in one-letter code: UDP-N-acetylglucosamine--peptide N-acetylglucosaminyltransferase GtfA subunit (506 aa).

UDP is bound at residue 16–19 (GVEY). Histidine 241 serves as a coordination point for N-acetyl-D-glucosamine. 384–385 (HK) is a UDP binding site. 404–407 (EGFG) provides a ligand contact to N-acetyl-D-glucosamine.

The protein belongs to the glycosyltransferase group 1 family. Glycosyltransferase 4 subfamily. As to quaternary structure, interacts with stabilizing protein GtfB (Gtf2), probably as a heterotetramer with 2 subunits each of GtfA and GtfB, part of the accessory SecA2/SecY2 protein translocation apparatus.

The protein resides in the cytoplasm. Its subcellular location is the cell membrane. The enzyme catalyses L-seryl-[protein] + UDP-N-acetyl-alpha-D-glucosamine = 3-O-[N-acetyl-alpha-D-glucosaminyl]-L-seryl-[protein] + UDP + H(+). It participates in protein modification; protein glycosylation. In terms of biological role, required for polymorphic O-glycosylation of the serine-rich repeat protein Srr2. Catalyzes the first step in glycosylation by transferring N-acetylglucosamine from UDP-GlcNAc to serine residues of Srr2. Part of the accessory SecA2/SecY2 system specifically required to export serine-rich repeat proteins, probably Srr2 in this organism. The GtfA-GtfB (Gtf1-Gtf2 in this bacteria) complex adds GlcNAc from UDP-GlcNAc to Srr2 substrate. This subunit has low glycosyltransferase activity; GtfB enhances glycosyltransferase activity in vitro. Upon expression in S.parasanguis GtfA/GtfB restores expression of serine-rich repeat protein Fap1 and complements a biofilm formation defect. This is UDP-N-acetylglucosamine--peptide N-acetylglucosaminyltransferase GtfA subunit from Streptococcus agalactiae.